We begin with the raw amino-acid sequence, 221 residues long: Ribosomal RNA small subunit methyltransferase Nep1 (221 aa).

S-adenosyl-L-methionine contacts are provided by residues glycine 174, glycine 179, and 196-201; that span reads IGNVSL.

Belongs to the class IV-like SAM-binding methyltransferase superfamily. RNA methyltransferase NEP1 family. In terms of assembly, homodimer.

It carries out the reaction a pseudouridine in rRNA + S-adenosyl-L-methionine = an N(1)-methylpseudouridine in rRNA + S-adenosyl-L-homocysteine + H(+). Its function is as follows. Methyltransferase involved in ribosomal biogenesis. Specifically catalyzes the N1-methylation of the pseudouridine corresponding to position 914 in M.jannaschii 16S rRNA. The sequence is that of Ribosomal RNA small subunit methyltransferase Nep1 from Pyrobaculum calidifontis (strain DSM 21063 / JCM 11548 / VA1).